The sequence spans 432 residues: Cyclic 2,3-diphosphoglycerate synthetase (432 aa).

It belongs to the cyclic 2,3-diphosphoglycerate synthetase family.

Its subcellular location is the cytoplasm. It carries out the reaction (2R)-2,3-bisphosphoglycerate + ATP + H(+) = cyclic (2R)-2,3-bisphosphoglycerate + ADP + phosphate. Its function is as follows. Catalyzes the formation of cyclic 2,3-diphosphoglycerate (cDPG) by formation of an intramolecular phosphoanhydride bond at the expense of ATP. The chain is Cyclic 2,3-diphosphoglycerate synthetase from Thermococcus kodakarensis (strain ATCC BAA-918 / JCM 12380 / KOD1) (Pyrococcus kodakaraensis (strain KOD1)).